A 307-amino-acid polypeptide reads, in one-letter code: D-alanine--D-alanine ligase (307 aa).

In terms of domain architecture, ATP-grasp spans 101–301 (KTVMRAAGVS…FGELVRWMVE (201 aa)). Position 127–182 (127–182 (PLTPPYVVKPIAEGSSMGVIIVREERSHPPQILASDEWVYGEEVLAETYIAGRELT)) interacts with ATP. The Mg(2+) site is built by D251, E268, and N270.

Belongs to the D-alanine--D-alanine ligase family. Mg(2+) is required as a cofactor. The cofactor is Mn(2+).

The protein localises to the cytoplasm. It catalyses the reaction 2 D-alanine + ATP = D-alanyl-D-alanine + ADP + phosphate + H(+). Its pathway is cell wall biogenesis; peptidoglycan biosynthesis. Functionally, cell wall formation. This is D-alanine--D-alanine ligase from Methylorubrum populi (strain ATCC BAA-705 / NCIMB 13946 / BJ001) (Methylobacterium populi).